The following is a 205-amino-acid chain: uncharacterized protein (205 aa).

It belongs to the peptidase C56 family.

This is an uncharacterized protein from Methanocaldococcus jannaschii (strain ATCC 43067 / DSM 2661 / JAL-1 / JCM 10045 / NBRC 100440) (Methanococcus jannaschii).